Reading from the N-terminus, the 379-residue chain is Homoserine O-succinyltransferase (379 aa).

In terms of domain architecture, AB hydrolase-1 spans 51-360 (NAVLICHALS…DAPQGHDAFL (310 aa)). The active-site Nucleophile is Ser157. Substrate is bound at residue Arg227. Catalysis depends on residues Asp323 and His356. Asp357 serves as a coordination point for substrate.

It belongs to the AB hydrolase superfamily. MetX family. In terms of assembly, homodimer.

The protein resides in the cytoplasm. The enzyme catalyses L-homoserine + succinyl-CoA = O-succinyl-L-homoserine + CoA. Its pathway is amino-acid biosynthesis; L-methionine biosynthesis via de novo pathway; O-succinyl-L-homoserine from L-homoserine: step 1/1. In terms of biological role, transfers a succinyl group from succinyl-CoA to L-homoserine, forming succinyl-L-homoserine. The protein is Homoserine O-succinyltransferase of Pseudomonas paraeruginosa (strain DSM 24068 / PA7) (Pseudomonas aeruginosa (strain PA7)).